We begin with the raw amino-acid sequence, 299 residues long: Tetrahydromethanopterin S-methyltransferase subunit E (299 aa).

A run of 6 helical transmembrane segments spans residues 57–77, 80–100, 133–153, 158–178, 237–257, and 261–281; these read AISG…SVAW, INAG…AAIV, IGPI…AAYL, LGNP…VGAI, GLCF…GNII, and LVTK…AAMI.

It belongs to the MtrE family. As to quaternary structure, the complex is composed of 8 subunits; MtrA, MtrB, MtrC, MtrD, MtrE, MtrF, MtrG and MtrH.

It localises to the cell membrane. It carries out the reaction 5-methyl-5,6,7,8-tetrahydromethanopterin + coenzyme M + 2 Na(+)(in) = 5,6,7,8-tetrahydromethanopterin + methyl-coenzyme M + 2 Na(+)(out). The protein operates within one-carbon metabolism; methanogenesis from CO(2); methyl-coenzyme M from 5,10-methylene-5,6,7,8-tetrahydromethanopterin: step 2/2. Functionally, part of a complex that catalyzes the formation of methyl-coenzyme M and tetrahydromethanopterin from coenzyme M and methyl-tetrahydromethanopterin. This is an energy-conserving, sodium-ion translocating step. In Methanococcus vannielii (strain ATCC 35089 / DSM 1224 / JCM 13029 / OCM 148 / SB), this protein is Tetrahydromethanopterin S-methyltransferase subunit E.